The following is an 84-amino-acid chain: U4-theraphotoxin-Hhn1aa (84 aa).

An N-terminal signal peptide occupies residues 1-22 (MKVTLIAILTCAAVLVLHTTAA). A propeptide spanning residues 23 to 47 (EELEESQLMEVGMPDTELAAVDEER) is cleaved from the precursor. 2 disulfide bridges follow: cysteine 51/cysteine 65 and cysteine 55/cysteine 76.

This sequence belongs to the neurotoxin 12 (Hwtx-2) family. 02 (Hwtx-2) subfamily. As to expression, expressed by the venom gland.

The protein localises to the secreted. Postsynaptic neurotoxin. This Cyriopagopus hainanus (Chinese bird spider) protein is U4-theraphotoxin-Hhn1aa.